The primary structure comprises 177 residues: Large ribosomal subunit protein uL6 (177 aa).

Lysine 44 is subject to N6-acetyllysine.

It belongs to the universal ribosomal protein uL6 family. In terms of assembly, part of the 50S ribosomal subunit.

In terms of biological role, this protein binds to the 23S rRNA, and is important in its secondary structure. It is located near the subunit interface in the base of the L7/L12 stalk, and near the tRNA binding site of the peptidyltransferase center. This is Large ribosomal subunit protein uL6 from Escherichia coli O139:H28 (strain E24377A / ETEC).